A 605-amino-acid chain; its full sequence is UvrABC system protein C (605 aa).

Residues 13-92 enclose the GIY-YIG domain; it reads TSPGVYLMKD…IKKHHPKYNV (80 aa). Positions 205 to 240 constitute a UVR domain; the sequence is SEIIQDLEKSIEKASQEQKFEQAGIYYRTLKLIQQA.

The protein belongs to the UvrC family. As to quaternary structure, interacts with UvrB in an incision complex.

The protein localises to the cytoplasm. Functionally, the UvrABC repair system catalyzes the recognition and processing of DNA lesions. UvrC both incises the 5' and 3' sides of the lesion. The N-terminal half is responsible for the 3' incision and the C-terminal half is responsible for the 5' incision. The protein is UvrABC system protein C of Chlamydia caviae (strain ATCC VR-813 / DSM 19441 / 03DC25 / GPIC) (Chlamydophila caviae).